We begin with the raw amino-acid sequence, 327 residues long: Gonadotropin-releasing hormone receptor (327 aa).

Topologically, residues 1 to 38 (MANNASLEQDQNHCSAINNSIPLTQGKLPTLTLSGKIR) are extracellular. Residues N4 and N18 are each glycosylated (N-linked (GlcNAc...) asparagine). The chain crosses the membrane as a helical span at residues 39–58 (VTVTFFLFLLSTAFNASFLV). Residues 59–77 (KLQRWTQKRKKGKKLSRMK) are Cytoplasmic-facing. A helical membrane pass occupies residues 78-97 (VLLKHLTLANLLETLIVMPL). At 98 to 115 (DGMWNITVQWYAGEFLCK) the chain is on the extracellular side. N102 is a glycosylation site (N-linked (GlcNAc...) asparagine). Residues C114 and C195 are joined by a disulfide bond. The chain crosses the membrane as a helical span at residues 116 to 137 (VLSYLKLFSMYAPAFMMVVISL). The Cytoplasmic portion of the chain corresponds to 138–164 (DRSLAVTQPLAVQSKSKLERSMTSLAW). A helical transmembrane segment spans residues 165 to 184 (ILSIVFAGPQLYIFRMIYLA). Residues 185 to 211 (DGSGPAVFSQCVTHCSFPQWWHEAFYN) lie on the Extracellular side of the membrane. The helical transmembrane segment at 212-231 (FFTFSCLFIIPLLIMLICNA) threads the bilayer. At 232-280 (KIIFALTRVLHQDPRKLQLNQSKNNIPRARLRTLKMTVAFGTSFVICWT) the chain is on the cytoplasmic side. A helical membrane pass occupies residues 281–299 (PYYVLGIWYWFDPEMLNRV). The Extracellular portion of the chain corresponds to 300 to 305 (SEPVNH). A helical membrane pass occupies residues 306–325 (FFFLFAFLNPCFDPLIYGYF). Residues 326-327 (SL) are Cytoplasmic-facing.

It belongs to the G-protein coupled receptor 1 family.

It localises to the cell membrane. Its function is as follows. Receptor for gonadotropin releasing hormone (GnRH) that mediates the action of GnRH to stimulate the secretion of the gonadotropic hormones luteinizing hormone (LH) and follicle-stimulating hormone (FSH). This receptor mediates its action by association with G-proteins that activate a phosphatidylinositol-calcium second messenger system. In Rattus norvegicus (Rat), this protein is Gonadotropin-releasing hormone receptor (Gnrhr).